The primary structure comprises 451 residues: Glutamyl-tRNA reductase (451 aa).

Substrate is bound by residues 49-52 (TCNR), Ser-109, 114-116 (EQQ), and Gln-120. Cys-50 functions as the Nucleophile in the catalytic mechanism. 190–195 (GAGAMG) serves as a coordination point for NADP(+).

The protein belongs to the glutamyl-tRNA reductase family. In terms of assembly, homodimer.

The catalysed reaction is (S)-4-amino-5-oxopentanoate + tRNA(Glu) + NADP(+) = L-glutamyl-tRNA(Glu) + NADPH + H(+). The protein operates within porphyrin-containing compound metabolism; protoporphyrin-IX biosynthesis; 5-aminolevulinate from L-glutamyl-tRNA(Glu): step 1/2. Its function is as follows. Catalyzes the NADPH-dependent reduction of glutamyl-tRNA(Glu) to glutamate 1-semialdehyde (GSA). The protein is Glutamyl-tRNA reductase of Mycolicibacterium smegmatis (strain ATCC 700084 / mc(2)155) (Mycobacterium smegmatis).